Here is an 802-residue protein sequence, read N- to C-terminus: MSSLGASFVQIKFDDLQFFENCGGGSFGSVYRAKWISQDKEVAVKKLLKIEKEAEILSVLSHRNIIQFYGVILEPPNYGIVTEYASLGSLYDYINSNRSEEMDMEHIMTWATDVAKGMHYLHMEAPVKVIHRDLKSRNVVIAADGVLKICDFGASRFHNHTTHMSLVGTFPWMAPEVIQSLPVSETCDTYSYGVVLWEMLTREVPFKGLEGLQVAWLVVEKNERLTIPSSCPRSFAELLHQCWEADAKKRPSFKQIISILESMSNDTNLPDQCNSFLHNKAEWRCEIEATLERLKKLERDLSFKEQELKERERRLKMWEQKLTEQSNTPLLPSFEIGAWTEDDVYFWVQQLVRKGESSVEMSGYASLFKENNITGKRLLLLEEEDLKDMGIVSKGHIIHFKSAIEKLTHDYLNLFHFPPLIKDSGGEPEENEEKIVNLELVFGFHLKPGTGPQDCKWKMYMEMDGDEVAITYIKDVTFNTSLPDAEILKMTKPPFVMEKWIVGIAEDQTVECTVTYENDVRTPKLTKHVHSIQWDRTKPQDEVKAVQLAIQTLFSSSEGNPGSRSDSSADCQWLDTLRMRQIASHTSLQRSQSNPILGSPFFPYFANQDSYAAAVRRTQTPVKYQQITPSINPSRSSSPTQYGLSRNFSSLNLSSRDSGFSSLNDSSSERGRYSDRSRNKYYRGSVSLNSSPKGRYGGKSQHSTPSRERYSGKFYRLPQSALNTHQSPDFKRSPNDHDRRVPRTIPGMPLHPETASKAGEEESRVSEGGWTKVEYRKKTHRQLSAKTSKERTRGNYRGRRNF.

Ser2 is subject to N-acetylserine. Ser2, Ser3, and Ser7 each carry phosphoserine. In terms of domain architecture, Protein kinase spans 16–277 (LQFFENCGGG…NLPDQCNSFL (262 aa)). ATP contacts are provided by residues 22–30 (CGGGSFGSV) and Lys45. Catalysis depends on Asp133, which acts as the Proton acceptor. Position 161 is a phosphothreonine; by autocatalysis (Thr161). Ser165 is modified (phosphoserine; by autocatalysis). A phosphoserine mark is found at Ser275 and Ser302. The leucine-zipper stretch occupies residues 287-308 (IEATLERLKKLERDLSFKEQEL). Residues 339-410 (WTEDDVYFWV…KSAIEKLTHD (72 aa)) form the SAM domain. Phosphoserine occurs at positions 434, 453, and 567. Thr586 is modified (phosphothreonine). 3 positions are modified to phosphoserine: Ser587, Ser593, and Ser599. Positions 624–642 (YQQITPSINPSRSSSPTQY) are enriched in polar residues. Residues 624-802 (YQQITPSINP…RGNYRGRRNF (179 aa)) form a disordered region. Position 628 is a phosphothreonine (Thr628). Phosphoserine is present on residues Ser634, Ser638, Ser649, Ser650, and Ser661. Residues 643–666 (GLSRNFSSLNLSSRDSGFSSLNDS) show a composition bias toward low complexity. The segment covering 667 to 678 (SSERGRYSDRSR) has biased composition (basic and acidic residues). The segment at 670–713 (RGRYSDRSRNKYYRGSVSLNSSPKGRYGGKSQHSTPSRERYSGK) is sensing domain (S). A phosphoserine mark is found at Ser685, Ser720, Ser727, and Ser733. The span at 728 to 741 (PDFKRSPNDHDRRV) shows a compositional bias: basic and acidic residues. Residue Thr744 is modified to Phosphothreonine. The segment at 776-802 (RKKTHRQLSAKTSKERTRGNYRGRRNF) is C-terminal domain (CTD).

The protein belongs to the protein kinase superfamily. STE Ser/Thr protein kinase family. MAP kinase kinase kinase subfamily. In terms of assembly, homodimer. Interacts with ZNF33A. Component of a signaling complex containing at least AKAP13, PKN1, MAPK14, MAP3K20 and MAP2K3. Within this complex, AKAP13 interacts directly with PKN1, which in turn recruits MAPK14, MAP2K3 and MAP3K20. Interacts with EIF2AK4/GCN2; promoting EIF2AK4/GCN2 kinase activity. Interacts with isoform ZAKbeta. As to quaternary structure, interacts with isoform ZAKalpha. Mg(2+) serves as cofactor. Post-translationally, activated by phosphorylation by PKN1, followed by autophosphorylation on Thr-161 and Ser-165. Autophosphorylation in response to ribotoxic stress promotes dissociation from colliding ribosomes and activation.

It is found in the cytoplasm. The protein localises to the nucleus. It catalyses the reaction L-seryl-[protein] + ATP = O-phospho-L-seryl-[protein] + ADP + H(+). The enzyme catalyses L-threonyl-[protein] + ATP = O-phospho-L-threonyl-[protein] + ADP + H(+). With respect to regulation, activated in response to stress, such as ribosomal stress, osmotic shock and ionizing radiation. Activated by phosphorylation by PKN1, followed by autophosphorylation on Thr-161 and Ser-165. Stress-activated component of a protein kinase signal transduction cascade that promotes programmed cell death in response to various stress, such as ribosomal stress, osmotic shock and ionizing radiation. Acts by catalyzing phosphorylation of MAP kinase kinases, leading to activation of the JNK (MAPK8/JNK1, MAPK9/JNK2 and/or MAPK10/JNK3) and MAP kinase p38 (MAPK11, MAPK12, MAPK13 and/or MAPK14) pathways. Activates JNK through phosphorylation of MAP2K4/MKK4 and MAP2K7/MKK7, and MAP kinase p38 gamma (MAPK12) via phosphorylation of MAP2K3/MKK3 and MAP2K6/MKK6. Involved in stress associated with adrenergic stimulation: contributes to cardiac decompensation during periods of acute cardiac stress. May be involved in regulation of S and G2 cell cycle checkpoint by mediating phosphorylation of CHEK2. Its function is as follows. Key component of the stress-activated protein kinase signaling cascade in response to ribotoxic stress or UV-B irradiation. Acts as the proximal sensor of ribosome collisions during the ribotoxic stress response (RSR). Directly binds to the ribosome by inserting its flexible C-terminus into the ribosomal intersubunit space, thereby acting as a sentinel for colliding ribosomes. Upon ribosome collisions, activates either the stress-activated protein kinase signal transduction cascade or the integrated stress response (ISR), leading to programmed cell death or cell survival, respectively. Dangerous levels of ribosome collisions trigger the autophosphorylation and activation of MAP3K20, which dissociates from colliding ribosomes and phosphorylates MAP kinase kinases, leading to activation of the JNK and MAP kinase p38 pathways that promote programmed cell death. Less dangerous levels of ribosome collisions trigger the integrated stress response (ISR): MAP3K20 activates EIF2AK4/GCN2 independently of its protein-kinase activity, promoting EIF2AK4/GCN2-mediated phosphorylation of EIF2S1/eIF-2-alpha. Also acts as a histone kinase by phosphorylating histone H3 at 'Ser-28' (H3S28ph). In terms of biological role, isoform that lacks the C-terminal region that mediates ribosome-binding: does not act as a sensor of ribosome collisions in response to ribotoxic stress. May act as an antagonist of isoform ZAKalpha: interacts with isoform ZAKalpha, leading to decrease the expression of isoform ZAKalpha. This chain is Mitogen-activated protein kinase kinase kinase 20, found in Mus musculus (Mouse).